Here is a 217-residue protein sequence, read N- to C-terminus: Monomethylamine corrinoid protein 2 (217 aa).

One can recognise a B12-binding N-terminal domain in the interval Met1–Glu91. The B12-binding domain occupies Thr93–Lys217. His106 lines the methylcob(III)alamin pocket.

It belongs to the methylamine corrinoid protein family. Can form a complex with MtmB.

The protein operates within one-carbon metabolism; methanogenesis from methylamine. Its function is as follows. Acts as a methyl group carrier between MtmB and MtbA. The protein is Monomethylamine corrinoid protein 2 (mtmC2) of Methanosarcina acetivorans (strain ATCC 35395 / DSM 2834 / JCM 12185 / C2A).